Consider the following 91-residue polypeptide: N(2)-fixation sustaining protein CowN (91 aa).

Belongs to the CowN family.

Is required to sustain N(2)-dependent growth in the presence of low levels of carbon monoxide (CO). Probably acts by protecting the N(2) fixation ability of the nitrogenase complex, which is inactivated in the presence of CO. In Beijerinckia indica subsp. indica (strain ATCC 9039 / DSM 1715 / NCIMB 8712), this protein is N(2)-fixation sustaining protein CowN.